The chain runs to 177 residues: Small ribosomal subunit protein mS23 (177 aa).

Ala-2 carries the post-translational modification N-acetylalanine. N6-succinyllysine is present on Lys-83. Lys-102 bears the N6-acetyllysine mark. Residues 145-177 form a disordered region; sequence LQASSEGHEPQEDDDLAQRGQVKQEPETAPSPP.

It belongs to the mitochondrion-specific ribosomal protein mS23 family. Component of the mitochondrial ribosome small subunit (28S) which comprises a 12S rRNA and about 30 distinct proteins.

It is found in the mitochondrion. The polypeptide is Small ribosomal subunit protein mS23 (Mus musculus (Mouse)).